Consider the following 631-residue polypeptide: Chaperone protein DnaK (631 aa).

Position 197 is a phosphothreonine; by autocatalysis (threonine 197). The interval 599–631 is disordered; sequence AQSDAGAAGSASEENTTSNEKVVDADFEDVEKK. Residues 603 to 612 show a composition bias toward low complexity; the sequence is AGAAGSASEE.

This sequence belongs to the heat shock protein 70 family.

Its function is as follows. Acts as a chaperone. This chain is Chaperone protein DnaK, found in Rickettsia bellii (strain RML369-C).